We begin with the raw amino-acid sequence, 75 residues long: Protein BsdD (75 aa).

In terms of biological role, involved in the non-oxidative decarboxylation and detoxification of phenolic derivatives under both aerobic and anaerobic conditions, however the precise biochemical function of BsdD in metabolism of phenolic acid is unknown. The sequence is that of Protein BsdD from Bacillus subtilis (strain 168).